A 404-amino-acid chain; its full sequence is Cysteine desulfurase IscS (404 aa).

Pyridoxal 5'-phosphate contacts are provided by residues 75 to 76 (AT), Asn-155, Gln-183, and 203 to 205 (SSH). The residue at position 206 (Lys-206) is an N6-(pyridoxal phosphate)lysine. Thr-243 is a pyridoxal 5'-phosphate binding site. Residue Cys-328 is the Cysteine persulfide intermediate of the active site. Residue Cys-328 participates in [2Fe-2S] cluster binding.

It belongs to the class-V pyridoxal-phosphate-dependent aminotransferase family. NifS/IscS subfamily. In terms of assembly, homodimer. Forms a heterotetramer with IscU, interacts with other sulfur acceptors. It depends on pyridoxal 5'-phosphate as a cofactor.

Its subcellular location is the cytoplasm. The enzyme catalyses (sulfur carrier)-H + L-cysteine = (sulfur carrier)-SH + L-alanine. Its pathway is cofactor biosynthesis; iron-sulfur cluster biosynthesis. Its function is as follows. Master enzyme that delivers sulfur to a number of partners involved in Fe-S cluster assembly, tRNA modification or cofactor biosynthesis. Catalyzes the removal of elemental sulfur atoms from cysteine to produce alanine. Functions as a sulfur delivery protein for Fe-S cluster synthesis onto IscU, an Fe-S scaffold assembly protein, as well as other S acceptor proteins. The protein is Cysteine desulfurase IscS of Histophilus somni (strain 2336) (Haemophilus somnus).